Consider the following 179-residue polypeptide: Large ribosomal subunit protein uL5 (179 aa).

The protein belongs to the universal ribosomal protein uL5 family. As to quaternary structure, part of the 50S ribosomal subunit; part of the 5S rRNA/L5/L18/L25 subcomplex. Contacts the 5S rRNA and the P site tRNA. Forms a bridge to the 30S subunit in the 70S ribosome.

This is one of the proteins that bind and probably mediate the attachment of the 5S RNA into the large ribosomal subunit, where it forms part of the central protuberance. In the 70S ribosome it contacts protein S13 of the 30S subunit (bridge B1b), connecting the 2 subunits; this bridge is implicated in subunit movement. Contacts the P site tRNA; the 5S rRNA and some of its associated proteins might help stabilize positioning of ribosome-bound tRNAs. This chain is Large ribosomal subunit protein uL5, found in Pseudoalteromonas translucida (strain TAC 125).